A 354-amino-acid polypeptide reads, in one-letter code: Nicotinate-nucleotide--dimethylbenzimidazole phosphoribosyltransferase (354 aa).

Glu317 (proton acceptor) is an active-site residue.

The protein belongs to the CobT family. Homodimer.

The enzyme catalyses 5,6-dimethylbenzimidazole + nicotinate beta-D-ribonucleotide = alpha-ribazole 5'-phosphate + nicotinate + H(+). It participates in nucleoside biosynthesis; alpha-ribazole biosynthesis; alpha-ribazole from 5,6-dimethylbenzimidazole: step 1/2. In terms of biological role, catalyzes the synthesis of alpha-ribazole-5'-phosphate from nicotinate mononucleotide (NAMN) and 5,6-dimethylbenzimidazole (DMB). This Salmonella arizonae (strain ATCC BAA-731 / CDC346-86 / RSK2980) protein is Nicotinate-nucleotide--dimethylbenzimidazole phosphoribosyltransferase.